The chain runs to 88 residues: Putative membrane protein insertion efficiency factor (88 aa).

The tract at residues 68–88 (VPPPNSDTRARGEADARSHRL) is disordered. Over residues 75–88 (TRARGEADARSHRL) the composition is skewed to basic and acidic residues.

It belongs to the UPF0161 family.

The protein resides in the cell inner membrane. Its function is as follows. Could be involved in insertion of integral membrane proteins into the membrane. This chain is Putative membrane protein insertion efficiency factor, found in Burkholderia cenocepacia (strain ATCC BAA-245 / DSM 16553 / LMG 16656 / NCTC 13227 / J2315 / CF5610) (Burkholderia cepacia (strain J2315)).